The primary structure comprises 324 residues: MLEKIINRENLSFEEAYNLFKELMNESDVRIAAYLAAFQTKGYTAEEIAGLAKAMRDYAIKLELGEVADTAGTGGDGSSSINVSTASALILSAFTKVAKHGNVSITSKSGSANVLEALGLNIKIPPEKARKMIEKTNFTFIFAPMYHPALKRIMPVRRELKVKTVFNILGPLANPAEPKFQVLGVNSPDLVEKMAEALSFLGVERALVVHGMGLDEVNPRGETIVAEVNGEDIDMYTLTPEDFGVERVKVVPCNSPQESAERIKAVLRGEGKVEDRNFILINASAALYASKVAEDFREGVELVKGILGEPMSKKLEEIICTSRS.

Residues G72, 75-76 (GD), S80, 82-85 (NVST), 99-107 (KHGNVSITS), and S111 contribute to the 5-phospho-alpha-D-ribose 1-diphosphate site. G72 contacts anthranilate. S84 provides a ligand contact to Mg(2+). Residue N102 coordinates anthranilate. R157 provides a ligand contact to anthranilate. Positions 215 and 216 each coordinate Mg(2+).

This sequence belongs to the anthranilate phosphoribosyltransferase family. In terms of assembly, homodimer. The cofactor is Mg(2+).

It catalyses the reaction N-(5-phospho-beta-D-ribosyl)anthranilate + diphosphate = 5-phospho-alpha-D-ribose 1-diphosphate + anthranilate. It participates in amino-acid biosynthesis; L-tryptophan biosynthesis; L-tryptophan from chorismate: step 2/5. Its function is as follows. Catalyzes the transfer of the phosphoribosyl group of 5-phosphorylribose-1-pyrophosphate (PRPP) to anthranilate to yield N-(5'-phosphoribosyl)-anthranilate (PRA). The protein is Anthranilate phosphoribosyltransferase of Pyrococcus abyssi (strain GE5 / Orsay).